The primary structure comprises 126 residues: MAQIPPSLQDLVNRFNQAQAQLQNVLLRKQQYEAELKEVEKAISEIERLPQDAKIFKNVGNFLVPQSRDVALQELRDRKELLELHVKTLTRQESMLREQLDKLREEINKELAKLKGGATEAAKGGG.

The protein belongs to the prefoldin subunit beta family. In terms of assembly, heterohexamer of two alpha and four beta subunits.

The protein localises to the cytoplasm. In terms of biological role, molecular chaperone capable of stabilizing a range of proteins. Seems to fulfill an ATP-independent, HSP70-like function in archaeal de novo protein folding. This Pyrobaculum aerophilum (strain ATCC 51768 / DSM 7523 / JCM 9630 / CIP 104966 / NBRC 100827 / IM2) protein is Prefoldin subunit beta (pfdB).